A 139-amino-acid polypeptide reads, in one-letter code: Cystatin (139 aa).

The first 23 residues, 1 to 23 (MAGARGCVVLLAAALMLVGAVLG), serve as a signal peptide directing secretion. The short motif at 76–80 (QLVSG) is the Secondary area of contact element. 2 disulfide bridges follow: cysteine 94-cysteine 104 and cysteine 118-cysteine 138. Serine 103 bears the Phosphoserine mark.

Belongs to the cystatin family.

Its subcellular location is the secreted. This protein binds tightly to and inhibits a variety of thiol proteases including ficin, papain, and cathepsins B, C, H, and L. Although isolated from egg white, it is also present in serum. In Gallus gallus (Chicken), this protein is Cystatin.